Reading from the N-terminus, the 218-residue chain is Octanoyltransferase (218 aa).

A BPL/LPL catalytic domain is found at 32 to 218 (GDAPEAVWLL…LRTFSRSFPD (187 aa)). Substrate-binding positions include 71-78 (RGGQYTYH), 151-153 (AIG), and 164-166 (GLS). C182 functions as the Acyl-thioester intermediate in the catalytic mechanism.

The protein belongs to the LipB family.

It localises to the cytoplasm. The enzyme catalyses octanoyl-[ACP] + L-lysyl-[protein] = N(6)-octanoyl-L-lysyl-[protein] + holo-[ACP] + H(+). The protein operates within protein modification; protein lipoylation via endogenous pathway; protein N(6)-(lipoyl)lysine from octanoyl-[acyl-carrier-protein]: step 1/2. Functionally, catalyzes the transfer of endogenously produced octanoic acid from octanoyl-acyl-carrier-protein onto the lipoyl domains of lipoate-dependent enzymes. Lipoyl-ACP can also act as a substrate although octanoyl-ACP is likely to be the physiological substrate. This Cereibacter sphaeroides (strain ATCC 17025 / ATH 2.4.3) (Rhodobacter sphaeroides) protein is Octanoyltransferase.